The primary structure comprises 200 residues: Transcription factor FapR (200 aa).

The protein belongs to the FapR family.

In terms of biological role, transcriptional factor involved in regulation of membrane lipid biosynthesis by repressing genes involved in fatty acid and phospholipid metabolism. This is Transcription factor FapR from Thermoanaerobacter pseudethanolicus (strain ATCC 33223 / 39E) (Clostridium thermohydrosulfuricum).